The chain runs to 102 residues: Biotrophy-associated secreted protein 2 (102 aa).

Residues 1 to 19 form the signal peptide; that stretch reads MVRVSTFAAILAMALSVTA. The N-linked (GlcNAc...) asparagine glycan is linked to Asn46.

It localises to the secreted. Functionally, secreted effector involved in biotrophic colonization of plant cells. This Pyricularia oryzae (strain 70-15 / ATCC MYA-4617 / FGSC 8958) (Rice blast fungus) protein is Biotrophy-associated secreted protein 2.